The primary structure comprises 117 residues: Large ribosomal subunit protein uL22 (117 aa).

This sequence belongs to the universal ribosomal protein uL22 family. As to quaternary structure, part of the 50S ribosomal subunit.

In terms of biological role, this protein binds specifically to 23S rRNA; its binding is stimulated by other ribosomal proteins, e.g. L4, L17, and L20. It is important during the early stages of 50S assembly. It makes multiple contacts with different domains of the 23S rRNA in the assembled 50S subunit and ribosome. The globular domain of the protein is located near the polypeptide exit tunnel on the outside of the subunit, while an extended beta-hairpin is found that lines the wall of the exit tunnel in the center of the 70S ribosome. This is Large ribosomal subunit protein uL22 from Lacticaseibacillus casei (strain BL23) (Lactobacillus casei).